Consider the following 113-residue polypeptide: Photosystem II reaction center Psb28 protein (113 aa).

It belongs to the Psb28 family. As to quaternary structure, part of the photosystem II complex.

It localises to the cellular thylakoid membrane. The sequence is that of Photosystem II reaction center Psb28 protein from Prochlorococcus marinus (strain NATL1A).